Reading from the N-terminus, the 471-residue chain is Exoglucanase 2 (471 aa).

An N-terminal signal peptide occupies residues 1 to 18 (MIVGILTTLATLATLAAS). Residues 19–24 (VPLEER) constitute a propeptide that is removed on maturation. At Q25 the chain carries Pyrrolidone carboxylic acid. Residues 26 to 62 (ACSSVWGQCGGQNWSGPTCCASGSTCVYSNDYYSQCL) enclose the CBM1 domain. Residues 64 to 101 (GAASSSSSTRAASTTSRVSPTTSRSSSATPPPGSTTTR) show a composition bias toward low complexity. Residues 64 to 108 (GAASSSSSTRAASTTSRVSPTTSRSSSATPPPGSTTTRVPPVGSG) form a disordered region. Residues 66-106 (ASSSSSTRAASTTSRVSPTTSRSSSATPPPGSTTTRVPPVG) are linker. The interval 107–471 (SGTATYSGNP…LLTNANPSFL (365 aa)) is catalytic. 2 O-linked (Man...) threonine glycosylation sites follow: T111 and T121. Residues S130, S133, S134, and S139 are each glycosylated (O-linked (Man...) serine). Residue T146 is glycosylated (O-linked (Man...) threonine). A disulfide bridge connects residues C200 and C259. The active-site Proton donor is the D245. A glycan (N-linked (GlcNAc) asparagine) is linked at N313. A glycan (N-linked (GlcNAc...) (high mannose) asparagine) is linked at N334. Cysteines 392 and 439 form a disulfide.

It belongs to the glycosyl hydrolase 6 (cellulase B) family. Asn-334 contains mainly a high-mannose-type glycan (Hex(7-9)GlcNAc(2)) in a 3:1 ration with a single GlcNAc. Asn-313 was primarily unglycosylated with a small fraction (18%) bearing a single GlcNAc at this site.

It is found in the secreted. The enzyme catalyses Hydrolysis of (1-&gt;4)-beta-D-glucosidic linkages in cellulose and cellotetraose, releasing cellobiose from the non-reducing ends of the chains.. Functionally, exocellobiohydrolases (CBH) that catalyzes the hydrolysis of 1,4-beta-D-glucosidic bonds in cellulose to release the disaccharide cellobiose. The degradation of cellulose involves an interplay between different cellulolytic enzymes. Hydrolysis starts with endoglucanases (EGs), which cut internal beta-1,4-glucosidic bonds in cellulose to reduce the polymerization degree of the substrate and create new chain ends for exocellobiohydrolases (CBHs). The CBHs release the disaccharide cellobiose from the non-reducing end of the cellulose polymer chain. Finally, beta-1,4-glucosidases hydrolyze the cellobiose and other short cello-oligosaccharides into glucose units. This chain is Exoglucanase 2 (cbh2), found in Hypocrea jecorina (Trichoderma reesei).